A 308-amino-acid polypeptide reads, in one-letter code: Putative S-adenosyl-L-methionine-dependent methyltransferase MAB_4584c (308 aa).

Residues Asp131 and 160–161 (DL) each bind S-adenosyl-L-methionine.

The protein belongs to the UPF0677 family.

Its function is as follows. Exhibits S-adenosyl-L-methionine-dependent methyltransferase activity. The chain is Putative S-adenosyl-L-methionine-dependent methyltransferase MAB_4584c from Mycobacteroides abscessus (strain ATCC 19977 / DSM 44196 / CCUG 20993 / CIP 104536 / JCM 13569 / NCTC 13031 / TMC 1543 / L948) (Mycobacterium abscessus).